Consider the following 449-residue polypeptide: 5'-deoxyadenosine deaminase (449 aa).

Positions 79 and 81 each coordinate Zn(2+). Residues glutamate 108 and histidine 200 each contribute to the substrate site. Histidine 227 lines the Zn(2+) pocket. Positions 230 and 316 each coordinate substrate. Aspartate 316 provides a ligand contact to Zn(2+).

This sequence belongs to the metallo-dependent hydrolases superfamily. MTA/SAH deaminase family. As to quaternary structure, homotetramer. Requires Zn(2+) as cofactor.

The catalysed reaction is 5'-deoxyadenosine + H2O + H(+) = 5'-deoxyinosine + NH4(+). It catalyses the reaction S-adenosyl-L-homocysteine + H2O + H(+) = S-inosyl-L-homocysteine + NH4(+). The enzyme catalyses S-methyl-5'-thioadenosine + H2O + H(+) = S-methyl-5'-thioinosine + NH4(+). It carries out the reaction adenosine + H2O + H(+) = inosine + NH4(+). Its pathway is amino-acid biosynthesis; S-adenosyl-L-methionine biosynthesis. Catalyzes the deamination of three SAM-derived enzymatic products, namely 5'-deoxyadenosine, S-adenosyl-L-homocysteine, and 5'-methylthioadenosine, to produce the inosine analogs. Can also deaminate adenosine. The preferred substrate for this enzyme is 5'-deoxyadenosine, but all these substrates are efficiently deaminated. Likely functions in a S-adenosyl-L-methionine (SAM) recycling pathway from S-adenosyl-L-homocysteine (SAH) produced from SAM-dependent methylation reactions. May also be involved in the recycling of 5'-deoxyadenosine, whereupon the 5'-deoxyribose moiety of 5'-deoxyinosine is further metabolized to deoxyhexoses used for the biosynthesis of aromatic amino acids in methanogens. The sequence is that of 5'-deoxyadenosine deaminase from Methanospirillum hungatei JF-1 (strain ATCC 27890 / DSM 864 / NBRC 100397 / JF-1).